The primary structure comprises 283 residues: Ribosomal RNA small subunit methyltransferase H (283 aa).

Residues Gly-31–His-33, Asp-50, Phe-77, Asp-93, and Gln-100 contribute to the S-adenosyl-L-methionine site.

It belongs to the methyltransferase superfamily. RsmH family.

It localises to the cytoplasm. It carries out the reaction cytidine(1402) in 16S rRNA + S-adenosyl-L-methionine = N(4)-methylcytidine(1402) in 16S rRNA + S-adenosyl-L-homocysteine + H(+). In terms of biological role, specifically methylates the N4 position of cytidine in position 1402 (C1402) of 16S rRNA. This is Ribosomal RNA small subunit methyltransferase H from Trichodesmium erythraeum (strain IMS101).